The chain runs to 141 residues: MSVNSNAYDAGIMGLKGKDFADQFFADENQVVHESDTVVLVLKKSDEINTFIEEILLTDYKKNVNPTVNVEDRAGYWWIKANGKIEVDCDEISELLGRQFNVYDFLVDVSSTIGRAYTLGNKFTITSELMGLDRKLEDYHA.

This sequence belongs to the TmoD/XamoD family. In terms of assembly, the soluble methane monooxygenase (sMMO) consists of four components A/MMOH (composed of alpha/MmoX, beta/MmoY and gamma/MmoZ), B/MMOB (MmoB), C/MMOR (MmoC) and D/MMOD (MmoD).

Functionally, the B protein acts as a regulator of electron flow through the soluble mmo complex, switching the enzyme from an oxidase to a hydroxylase in the presence of the substrate. The sequence is that of Methane monooxygenase regulatory protein B (mmoB) from Methylococcus capsulatus (strain ATCC 33009 / NCIMB 11132 / Bath).